Here is a 388-residue protein sequence, read N- to C-terminus: MTSVSLGMPSAPPPVLAPRRKTRQIKVGSVGVGSDSPISVQSMTTTPTTDINATLQQIAELTASGCDIVRVACPSADDAEALPIIARKSQIPVIADIHFQPKYVFAAIEAGCAAVRVNPGNIRKFDDQVKEIARAAKDHGTSIRIGVNAGSLEPGILKKYGKATPEALVESAVWEASLFEEHGFHDFKISVKHNDPVIMVAAYEMLAEKGDWPLHLGVTEAGPAFQGTIKSATAFGALLSRGIGDTIRVSLSAPPVEEIKVGNQILQSLNLRPRKLEIVSCPSCGRAQVDVYTLAEQVTAGLEGMEIPLRVAVMGCVVNGPGEAREADLGVASGNGKGQIFVKGEVIKTVPESEIVETLIEEAMRIAEEMGEADGEDAVKGSPVVSVS.

The [4Fe-4S] cluster site is built by C281, C284, C316, and E323.

Belongs to the IspG family. It depends on [4Fe-4S] cluster as a cofactor.

The catalysed reaction is (2E)-4-hydroxy-3-methylbut-2-enyl diphosphate + oxidized [flavodoxin] + H2O + 2 H(+) = 2-C-methyl-D-erythritol 2,4-cyclic diphosphate + reduced [flavodoxin]. It participates in isoprenoid biosynthesis; isopentenyl diphosphate biosynthesis via DXP pathway; isopentenyl diphosphate from 1-deoxy-D-xylulose 5-phosphate: step 5/6. Its function is as follows. Converts 2C-methyl-D-erythritol 2,4-cyclodiphosphate (ME-2,4cPP) into 1-hydroxy-2-methyl-2-(E)-butenyl 4-diphosphate. This chain is 4-hydroxy-3-methylbut-2-en-1-yl diphosphate synthase (flavodoxin), found in Arthrobacter sp. (strain FB24).